Here is a 188-residue protein sequence, read N- to C-terminus: MSLYALLLVALGMSMDAFAVALAKGAAVRMPPRKIAATALVFGTVEAFMPLAGWVGGFYAKPFISEWDHWVAFVLLGGLGLKMMREGLSGEAEDVRESKQESLWMTVLTAFGTSIDSMIVGVGLAFMEVNIAFAAAVIGMAATVMVTIGLTAGKAFGVLFGRRAEFAGGLVLIAIGTWTLLSHLGLIQ.

6 consecutive transmembrane segments (helical) span residues 3–23, 35–55, 63–83, 104–126, 140–160, and 167–187; these read LYAL…VALA, IAAT…AGWV, FISE…GLKM, WMTV…GLAF, MAAT…GVLF, and AGGL…LGLI.

It belongs to the MntP (TC 9.B.29) family.

It is found in the cell inner membrane. Functionally, probably functions as a manganese efflux pump. This chain is Putative manganese efflux pump MntP, found in Neisseria gonorrhoeae (strain ATCC 700825 / FA 1090).